The chain runs to 188 residues: MINSQDIKKGTCIRLDGKLYFCVDFLHVKPGKGNTIMRTTLKDVVKGGQIERRFNIGEKLEDVRVERRPYQFTYTEGEHYHFMNQETFDDVIIDKNLINGVDFMKEGEIVDVVSDASTDTVLFADMPTKVQLKVTYTEPGIKGDTATNTLKPATVETGAEVRVPLFINEGEVIEINTTDGSYVGRIRE.

The protein belongs to the elongation factor P family.

It localises to the cytoplasm. It functions in the pathway protein biosynthesis; polypeptide chain elongation. Functionally, involved in peptide bond synthesis. Stimulates efficient translation and peptide-bond synthesis on native or reconstituted 70S ribosomes in vitro. Probably functions indirectly by altering the affinity of the ribosome for aminoacyl-tRNA, thus increasing their reactivity as acceptors for peptidyl transferase. This chain is Elongation factor P, found in Parabacteroides distasonis (strain ATCC 8503 / DSM 20701 / CIP 104284 / JCM 5825 / NCTC 11152).